Reading from the N-terminus, the 673-residue chain is L-type lectin-domain containing receptor kinase SIT2 (673 aa).

Residues 1 to 27 (MVLPKPEMPFFVLLLFLGLGCLRPAAA) form the signal peptide. The Extracellular segment spans residues 28–296 (TDERFVFNGF…FPKPRSKTLE (269 aa)). The interval 32-270 (FVFNGFTGAN…VLGWSFKMNG (239 aa)) is legume-lectin like. Residues Asn41, Asn60, Asn82, Asn118, Asn138, Asn191, Asn214, Asn235, and Asn276 are each glycosylated (N-linked (GlcNAc...) asparagine). The helical transmembrane segment at 297-317 (IVLPIASAVLVFAVAAAVFVF) threads the bilayer. The Cytoplasmic portion of the chain corresponds to 318 to 673 (MRRRRMFSEL…GTFSDLSGGR (356 aa)). The 280-residue stretch at 352–631 (FSDKRLLGIG…LEGDVPLPEL (280 aa)) folds into the Protein kinase domain. ATP contacts are provided by residues 358–366 (LGIGGFGRV) and Lys381. Asp477 serves as the catalytic Proton acceptor.

This sequence in the C-terminal section; belongs to the protein kinase superfamily. Ser/Thr protein kinase family. The protein in the N-terminal section; belongs to the leguminous lectin family. Mainly expressed in root epidermal cells.

The protein resides in the cell membrane. The enzyme catalyses L-seryl-[protein] + ATP = O-phospho-L-seryl-[protein] + ADP + H(+). The catalysed reaction is L-threonyl-[protein] + ATP = O-phospho-L-threonyl-[protein] + ADP + H(+). Lectin-domain containing receptor kinase involved in salt stress response. Acts as a negative regulator of salt tolerance. This Oryza sativa subsp. japonica (Rice) protein is L-type lectin-domain containing receptor kinase SIT2.